A 345-amino-acid polypeptide reads, in one-letter code: Ribosomal RNA small subunit methyltransferase H (345 aa).

S-adenosyl-L-methionine is bound by residues 47 to 49, D65, F92, D113, and Q120; that span reads GGY. The interval 296–345 is disordered; it reads EPGPDEVAGNPRARSAKLRAAERTNAPAHPGGDLMGLLPAPPPQRHGRRR.

Belongs to the methyltransferase superfamily. RsmH family.

The protein localises to the cytoplasm. It catalyses the reaction cytidine(1402) in 16S rRNA + S-adenosyl-L-methionine = N(4)-methylcytidine(1402) in 16S rRNA + S-adenosyl-L-homocysteine + H(+). Specifically methylates the N4 position of cytidine in position 1402 (C1402) of 16S rRNA. The protein is Ribosomal RNA small subunit methyltransferase H of Xanthobacter autotrophicus (strain ATCC BAA-1158 / Py2).